The primary structure comprises 576 residues: Cilia- and flagella-associated protein 100 (576 aa).

The tract at residues 1-29 (MPIYDEASVPGTAAGRSTTDVGATAGANP) is disordered. Coiled coils occupy residues 125–226 (IFLL…CRRY), 254–311 (VAEW…IMKE), and 342–408 (YKQL…LKDR). Disordered regions lie at residues 417-439 (TLSM…PGGP), 495-519 (AEKA…HREH), and 538-563 (TGKP…RNDE).

Belongs to the CFAP100 family. As to quaternary structure, interacts with FAP73; form the modifier of inner arm (MIA) complex.

The protein localises to the cytoplasm. The protein resides in the cytoskeleton. It is found in the flagellum axoneme. In terms of biological role, as part of MIA, a complex associated with the outer doublet microtubules of the axoneme, may play a role in ciliary/flagellar motility by regulating the assembly and the activity of axonemal inner dynein arm. This Chlamydomonas reinhardtii (Chlamydomonas smithii) protein is Cilia- and flagella-associated protein 100.